The chain runs to 185 residues: Ribosome-recycling factor (185 aa).

The protein belongs to the RRF family.

The protein resides in the cytoplasm. Responsible for the release of ribosomes from messenger RNA at the termination of protein biosynthesis. May increase the efficiency of translation by recycling ribosomes from one round of translation to another. The polypeptide is Ribosome-recycling factor (Thermomicrobium roseum (strain ATCC 27502 / DSM 5159 / P-2)).